Reading from the N-terminus, the 119-residue chain is Hemerythrin subunit B (119 aa).

Fe cation is bound by residues His26, His55, Glu59, His74, His78, His107, and Asp112.

This sequence belongs to the hemerythrin family.

Its function is as follows. Hemerythrin is a respiratory protein in blood cells of certain marine worms. The oxygen-binding site in each chain contains two iron atoms. The sequence is that of Hemerythrin subunit B from Sipunculus nudus (Sipunculan worm).